The primary structure comprises 757 residues: Double zinc ribbon and ankyrin repeat-containing protein 1 (757 aa).

2 consecutive DZANK-type zinc fingers follow at residues 230-290 (CAHC…VVCE) and 359-407 (CSRC…GSCG). 2 ANK repeats span residues 631–662 (ENRL…DPNC) and 666–695 (QGRP…DIDQ).

Interacts with NINL. Associates with DYNC1H1 and multiple dynein intermediate and light chains as well as actin-binding proteins. In terms of tissue distribution, expressed in retina.

Its subcellular location is the cell projection. It localises to the cilium. Functionally, involved in vesicle transport in photoreceptor cells. In Rattus norvegicus (Rat), this protein is Double zinc ribbon and ankyrin repeat-containing protein 1.